The primary structure comprises 406 residues: Cysteine desulfurase (406 aa).

Position 226 is an N6-(pyridoxal phosphate)lysine (Lys226). The active-site Cysteine persulfide intermediate is the Cys364.

Belongs to the class-V pyridoxal-phosphate-dependent aminotransferase family. Csd subfamily. In terms of assembly, homodimer. Interacts with SufE and the SufBCD complex composed of SufB, SufC and SufD. The interaction with SufE is required to mediate the direct transfer of the sulfur atom from the S-sulfanylcysteine. Pyridoxal 5'-phosphate serves as cofactor.

The protein localises to the cytoplasm. It catalyses the reaction (sulfur carrier)-H + L-cysteine = (sulfur carrier)-SH + L-alanine. It carries out the reaction L-selenocysteine + AH2 = hydrogenselenide + L-alanine + A + H(+). It participates in cofactor biosynthesis; iron-sulfur cluster biosynthesis. In terms of biological role, cysteine desulfurases mobilize the sulfur from L-cysteine to yield L-alanine, an essential step in sulfur metabolism for biosynthesis of a variety of sulfur-containing biomolecules. Component of the suf operon, which is activated and required under specific conditions such as oxidative stress and iron limitation. Acts as a potent selenocysteine lyase in vitro, that mobilizes selenium from L-selenocysteine. Selenocysteine lyase activity is however unsure in vivo. The sequence is that of Cysteine desulfurase from Salmonella dublin (strain CT_02021853).